A 320-amino-acid polypeptide reads, in one-letter code: Dipeptide transport system permease protein DppC (320 aa).

6 helical membrane passes run 56–76 (LAMAGLFILLFLFVMAVIGPF), 121–141 (LFVGVMAALIDFLIGVIYGGV), 154–176 (MRIIEVLYGLPYLLVVILLMVLM), 230–252 (LLPNTMGAIIVQMTLTVPAAIFA), 267–287 (FASWGVMANDGLPTILSGHWW), and 289–309 (LFFPAFFISLTMYAFNVLGDG). Positions 117 to 307 (ARISLFVGVM…LTMYAFNVLG (191 aa)) constitute an ABC transmembrane type-1 domain.

Belongs to the binding-protein-dependent transport system permease family. OppBC subfamily.

It localises to the cell membrane. Functionally, probably part of the ABC transporter DppBCDE involved in dipeptide transport. Responsible for the translocation of the substrate across the membrane. The sequence is that of Dipeptide transport system permease protein DppC (dppC) from Bacillus subtilis (strain 168).